The sequence spans 364 residues: Protein FAM81A (364 aa).

Residues 80 to 107 (IRNITAIVKQLNRDIEVLQEQIRARDNI) are a coiled coil. Basic and acidic residues predominate over residues 275-300 (ARLDKIEESQRRNAEGQRKPEEEKVH). The disordered stretch occupies residues 275-301 (ARLDKIEESQRRNAEGQRKPEEEKVHG).

Belongs to the FAM81 family. In terms of assembly, interacts with DLG4/PSD-95, GRIN2B/GLUN2B and SYNGAP1; the interactions facilitate condensate formation. Highly expressed in brain (at protein level).

Its subcellular location is the postsynaptic density. It is found in the cytoplasm. Its function is as follows. Facilitates the interaction and assembly of proteins within the postsynaptic density by promoting the condensation of postsynaptic proteins via liquid-liquid phase separation. Required for neuronal activity. Accumulation at the postsynaptic density results in enlargement of dendritic spines. This chain is Protein FAM81A, found in Rattus norvegicus (Rat).